Consider the following 399-residue polypeptide: Acetylornithine aminotransferase (399 aa).

Residues 102 to 103 and F135 contribute to the pyridoxal 5'-phosphate site; that span reads GA. R138 is a N(2)-acetyl-L-ornithine binding site. Position 220–223 (220–223) interacts with pyridoxal 5'-phosphate; sequence DEIQ. Position 249 is an N6-(pyridoxal phosphate)lysine (K249). S277 lines the N(2)-acetyl-L-ornithine pocket. T278 is a pyridoxal 5'-phosphate binding site.

This sequence belongs to the class-III pyridoxal-phosphate-dependent aminotransferase family. ArgD subfamily. In terms of assembly, homodimer. Pyridoxal 5'-phosphate is required as a cofactor.

The protein resides in the cytoplasm. It carries out the reaction N(2)-acetyl-L-ornithine + 2-oxoglutarate = N-acetyl-L-glutamate 5-semialdehyde + L-glutamate. The protein operates within amino-acid biosynthesis; L-arginine biosynthesis; N(2)-acetyl-L-ornithine from L-glutamate: step 4/4. The chain is Acetylornithine aminotransferase from Oceanobacillus iheyensis (strain DSM 14371 / CIP 107618 / JCM 11309 / KCTC 3954 / HTE831).